The chain runs to 353 residues: MTATLERRESASIWGRFCNWVTSTETRLYIGWFGVLMIPTLLTATSVFIIAFIAAPPVDIDGIREPVSGSLLYGNNIISGAIIPTSAAIGLHFYPIWEAASVDEWLYNGGPYELIVLHFLLGVACYMGREWELSYRLGMRPWIAVAYSAPVAAATAVFLIYPIGQGSFSDGMPLGISGTFNFMIVFQAEHNILMHPFHMLGVAGVFGGSLFSAMHGSLVTSSLIRETTENESANAGYKFGQEEETYNIVAAHGYFGRLIFQYASFNNSRSLHFFLAAWPVVGIWFTALGISTMAFNLNGFNFNQSVVDSQGRVINTWADIINRANPGMEVMHERNAHNFPPNLAAIEAPAVNG.

At Thr2 the chain carries N-acetylthreonine. The residue at position 2 (Thr2) is a Phosphothreonine. 3 helical membrane-spanning segments follow: residues 29–46 (YIGW…TATS), 118–133 (HFLL…EWEL), and 142–156 (WIAV…AATA). His118 serves as a coordination point for chlorophyll a. Position 126 (Tyr126) interacts with pheophytin a. [CaMn4O5] cluster is bound by residues Asp170 and Glu189. A helical transmembrane segment spans residues 197-218 (FHMLGVAGVFGGSLFSAMHGSL). His198 lines the chlorophyll a pocket. Residues His215 and 264–265 (SF) each bind a quinone. A Fe cation-binding site is contributed by His215. Residue His272 coordinates Fe cation. The chain crosses the membrane as a helical span at residues 274-288 (FLAAWPVVGIWFTAL). Positions 332, 333, and 344 each coordinate [CaMn4O5] cluster. The propeptide occupies 345-353 (AIEAPAVNG).

The protein belongs to the reaction center PufL/M/PsbA/D family. As to quaternary structure, PSII is composed of 1 copy each of membrane proteins PsbA, PsbB, PsbC, PsbD, PsbE, PsbF, PsbH, PsbI, PsbJ, PsbK, PsbL, PsbM, PsbT, PsbX, PsbY, PsbZ, Psb30/Ycf12, at least 3 peripheral proteins of the oxygen-evolving complex and a large number of cofactors. It forms dimeric complexes. The D1/D2 heterodimer binds P680, chlorophylls that are the primary electron donor of PSII, and subsequent electron acceptors. It shares a non-heme iron and each subunit binds pheophytin, quinone, additional chlorophylls, carotenoids and lipids. D1 provides most of the ligands for the Mn4-Ca-O5 cluster of the oxygen-evolving complex (OEC). There is also a Cl(-1) ion associated with D1 and D2, which is required for oxygen evolution. The PSII complex binds additional chlorophylls, carotenoids and specific lipids. is required as a cofactor. Tyr-161 forms a radical intermediate that is referred to as redox-active TyrZ, YZ or Y-Z. Post-translationally, C-terminally processed by CTPA; processing is essential to allow assembly of the oxygen-evolving complex and thus photosynthetic growth.

The protein resides in the plastid. It localises to the chloroplast thylakoid membrane. The enzyme catalyses 2 a plastoquinone + 4 hnu + 2 H2O = 2 a plastoquinol + O2. Photosystem II (PSII) is a light-driven water:plastoquinone oxidoreductase that uses light energy to abstract electrons from H(2)O, generating O(2) and a proton gradient subsequently used for ATP formation. It consists of a core antenna complex that captures photons, and an electron transfer chain that converts photonic excitation into a charge separation. The D1/D2 (PsbA/PsbD) reaction center heterodimer binds P680, the primary electron donor of PSII as well as several subsequent electron acceptors. This chain is Photosystem II protein D1, found in Conocephalum japonicum (Liverwort).